A 405-amino-acid chain; its full sequence is Imidazolonepropionase (405 aa).

Fe(3+) is bound by residues His70 and His72. Zn(2+) contacts are provided by His70 and His72. 4-imidazolone-5-propanoate contacts are provided by Arg79, Tyr142, and His175. Tyr142 lines the N-formimidoyl-L-glutamate pocket. His240 lines the Fe(3+) pocket. Residue His240 participates in Zn(2+) binding. Gln243 contacts 4-imidazolone-5-propanoate. Asp315 contacts Fe(3+). Asp315 contacts Zn(2+). N-formimidoyl-L-glutamate contacts are provided by Asn317 and Gly319. Thr320 contacts 4-imidazolone-5-propanoate.

The protein belongs to the metallo-dependent hydrolases superfamily. HutI family. The cofactor is Zn(2+). Requires Fe(3+) as cofactor.

The protein localises to the cytoplasm. It catalyses the reaction 4-imidazolone-5-propanoate + H2O = N-formimidoyl-L-glutamate. It functions in the pathway amino-acid degradation; L-histidine degradation into L-glutamate; N-formimidoyl-L-glutamate from L-histidine: step 3/3. Catalyzes the hydrolytic cleavage of the carbon-nitrogen bond in imidazolone-5-propanoate to yield N-formimidoyl-L-glutamate. It is the third step in the universal histidine degradation pathway. This is Imidazolonepropionase from Ectopseudomonas mendocina (strain ymp) (Pseudomonas mendocina).